We begin with the raw amino-acid sequence, 33 residues long: Cytochrome b6-f complex subunit 6 (33 aa).

A helical transmembrane segment spans residues 4 to 24 (ITIISYFGFLLASIIFTLVLF).

It belongs to the PetL family. In terms of assembly, the 4 large subunits of the cytochrome b6-f complex are cytochrome b6, subunit IV (17 kDa polypeptide, PetD), cytochrome f and the Rieske protein, while the 4 small subunits are PetG, PetL, PetM and PetN. The complex functions as a dimer.

It localises to the plastid. It is found in the chloroplast thylakoid membrane. Component of the cytochrome b6-f complex, which mediates electron transfer between photosystem II (PSII) and photosystem I (PSI), cyclic electron flow around PSI, and state transitions. PetL is important for photoautotrophic growth as well as for electron transfer efficiency and stability of the cytochrome b6-f complex. This chain is Cytochrome b6-f complex subunit 6, found in Pinus thunbergii (Japanese black pine).